The following is a 223-amino-acid chain: Endonuclease NucS (223 aa).

It belongs to the NucS endonuclease family.

The protein localises to the cytoplasm. Cleaves both 3' and 5' ssDNA extremities of branched DNA structures. The polypeptide is Endonuclease NucS (Mycolicibacterium gilvum (strain PYR-GCK) (Mycobacterium gilvum (strain PYR-GCK))).